Here is a 256-residue protein sequence, read N- to C-terminus: Ribosomal RNA small subunit methyltransferase A (256 aa).

The S-adenosyl-L-methionine site is built by Asn12, Leu14, Gly39, Glu60, Asp85, and Asn103.

It belongs to the class I-like SAM-binding methyltransferase superfamily. rRNA adenine N(6)-methyltransferase family. RsmA subfamily.

It is found in the cytoplasm. The catalysed reaction is adenosine(1518)/adenosine(1519) in 16S rRNA + 4 S-adenosyl-L-methionine = N(6)-dimethyladenosine(1518)/N(6)-dimethyladenosine(1519) in 16S rRNA + 4 S-adenosyl-L-homocysteine + 4 H(+). Functionally, specifically dimethylates two adjacent adenosines (A1518 and A1519) in the loop of a conserved hairpin near the 3'-end of 16S rRNA in the 30S particle. May play a critical role in biogenesis of 30S subunits. The sequence is that of Ribosomal RNA small subunit methyltransferase A from Legionella pneumophila (strain Lens).